Reading from the N-terminus, the 252-residue chain is MEVVGLLCVAVAVLTWGFLRVWNSAERMRSPEQAGLPGAGSRALVVIAHPDDEAMFFAPTILGLARLKQQVSLLCFSSGNYYNQGEIRKKELLQSCAVLGIPPSRVMIIDKREFPDDPEVQWDTEHVASTILQHIHANATDLVVTFDAEGVSGHSNHIALYKAVRALHSGGKLPEGCSVLTLQSVNVLRKYVFLLDLPWTLLSPQGVLFVLTSKEVAQAKKAMSCHRSQLLWFRHLYTVFSRYMSVNSLQLL.

The helical transmembrane segment at 2-22 (EVVGLLCVAVAVLTWGFLRVW) threads the bilayer. Topologically, residues 23–252 (NSAERMRSPE…YMSVNSLQLL (230 aa)) are cytoplasmic.

It belongs to the PIGL family.

It is found in the endoplasmic reticulum membrane. The catalysed reaction is a 6-(N-acetyl-alpha-D-glucosaminyl)-1-(1,2-diacyl-sn-glycero-3-phospho)-1D-myo-inositol + H2O = a 6-(alpha-D-glucosaminyl)-1-(1,2-diacyl-sn-glycero-3-phospho)-1D-myo-inositol + acetate. It participates in glycolipid biosynthesis; glycosylphosphatidylinositol-anchor biosynthesis. Its function is as follows. Catalyzes the second step of glycosylphosphatidylinositol (GPI) biosynthesis, which is the de-N-acetylation of N-acetylglucosaminyl-phosphatidylinositol. The polypeptide is N-acetylglucosaminyl-phosphatidylinositol de-N-acetylase (Pigl) (Rattus norvegicus (Rat)).